The sequence spans 270 residues: Ethanolamine ammonia-lyase small subunit (270 aa).

Positions 166, 187, and 216 each coordinate adenosylcob(III)alamin.

Belongs to the EutC family. The basic unit is a heterodimer which dimerizes to form tetramers. The heterotetramers trimerize; 6 large subunits form a core ring with 6 small subunits projecting outwards. The cofactor is adenosylcob(III)alamin.

The protein localises to the bacterial microcompartment. The enzyme catalyses ethanolamine = acetaldehyde + NH4(+). Its pathway is amine and polyamine degradation; ethanolamine degradation. Its function is as follows. Catalyzes the deamination of various vicinal amino-alcohols to oxo compounds. Allows this organism to utilize ethanolamine as the sole source of nitrogen and carbon in the presence of external vitamin B12. The chain is Ethanolamine ammonia-lyase small subunit from Ralstonia nicotianae (strain ATCC BAA-1114 / GMI1000) (Ralstonia solanacearum).